A 131-amino-acid chain; its full sequence is Small ribosomal subunit protein uS8 (131 aa).

Belongs to the universal ribosomal protein uS8 family. Part of the 30S ribosomal subunit. Contacts proteins S5 and S12.

In terms of biological role, one of the primary rRNA binding proteins, it binds directly to 16S rRNA central domain where it helps coordinate assembly of the platform of the 30S subunit. In Bacteroides fragilis (strain ATCC 25285 / DSM 2151 / CCUG 4856 / JCM 11019 / LMG 10263 / NCTC 9343 / Onslow / VPI 2553 / EN-2), this protein is Small ribosomal subunit protein uS8.